Here is a 321-residue protein sequence, read N- to C-terminus: Probable arabinan endo-1,5-alpha-L-arabinosidase A (321 aa).

The signal sequence occupies residues 1–19; sequence MSASVFVVVASCLAALAHG. The Proton acceptor role is filled by Asp-34. Glu-200 acts as the Proton donor in catalysis.

This sequence belongs to the glycosyl hydrolase 43 family.

The protein localises to the secreted. It carries out the reaction Endohydrolysis of (1-&gt;5)-alpha-arabinofuranosidic linkages in (1-&gt;5)-arabinans.. The protein operates within glycan metabolism; L-arabinan degradation. Functionally, endo-1,5-alpha-L-arabinanase involved in degradation of pectin. Its preferred substrate is linear 1,5-alpha-L-arabinan. This Aspergillus fumigatus (strain ATCC MYA-4609 / CBS 101355 / FGSC A1100 / Af293) (Neosartorya fumigata) protein is Probable arabinan endo-1,5-alpha-L-arabinosidase A (abnA).